The following is a 116-amino-acid chain: Large ribosomal subunit protein bL19 (116 aa).

This sequence belongs to the bacterial ribosomal protein bL19 family.

Its function is as follows. This protein is located at the 30S-50S ribosomal subunit interface and may play a role in the structure and function of the aminoacyl-tRNA binding site. This is Large ribosomal subunit protein bL19 from Ectopseudomonas mendocina (strain ymp) (Pseudomonas mendocina).